The sequence spans 130 residues: uncharacterized protein (130 aa).

This sequence belongs to the HesB/IscA family.

This is an uncharacterized protein from Buchnera aphidicola subsp. Acyrthosiphon pisum (strain APS) (Acyrthosiphon pisum symbiotic bacterium).